Here is a 163-residue protein sequence, read N- to C-terminus: Putative MucR family transcriptional regulatory protein RA0938 (163 aa).

It belongs to the ros/MucR family.

This Rhizobium meliloti (strain 1021) (Ensifer meliloti) protein is Putative MucR family transcriptional regulatory protein RA0938.